The primary structure comprises 377 residues: MEMPEEPANSGHSLPPVYIYSPEYVSICDSLVKVPKRASMVHSLIEAYALHKQMRIVKPKVASMEEMATFHTDAYLQHLQKVSQEGDEDHPDSIEYGLGYDCPATEGIFDYAAAIGGGTITAAQCLIDGKCKVAINWSGGWHHAKKDEASGFCYLNDAVLGILRLRRKFDRILYVDLDLHHGDGVEDAFSFTSKVMTVSLHKFSPGFFPGTGDMSDVGLGKGRYYSVNVPIQDGIQDEKYYHICESVLKEVYQAFNPKAVVLQLGADTIAGDPMCSFNMTPVGIGKCLKYVLQWQLATLILGGGGYNLANTARCWTYLTGVILGKTLSSEIPDHEFFTAYGPDYVLEITPSCRPDRNEPHRIQQILNYIKGNLKHVV.

Positions 14–324 (LPPVYIYSPE…WTYLTGVILG (311 aa)) are histone deacetylase. Ser39 bears the Phosphoserine mark. Asp101 provides a ligand contact to substrate. The active-site Proton acceptor is His143. Gly151 is a binding site for substrate. 3 residues coordinate a divalent metal cation: Asp178, His180, and Asp267. Tyr306 provides a ligand contact to substrate.

It belongs to the histone deacetylase family. HD type 1 subfamily. In terms of assembly, interacts with CBFA2T3. Interacts with phosphorylated SMG5/EST1B; this interaction protects SMG5 from ubiquitin-mediated degradation. Associates with alpha-SMA (smooth muscle alpha-actin). A divalent metal cation is required as a cofactor. Post-translationally, phosphorylated by PKA on serine 39. Phosphorylation reduces deacetylase activity observed preferentially on histones H3 and H4.

It is found in the nucleus. Its subcellular location is the chromosome. The protein resides in the cytoplasm. The enzyme catalyses N(6)-acetyl-L-lysyl-[histone] + H2O = L-lysyl-[histone] + acetate. It catalyses the reaction N(6)-acetyl-L-lysyl-[protein] + H2O = L-lysyl-[protein] + acetate. It carries out the reaction N(6)-(2E)-butenoyl-L-lysyl-[protein] + H2O = (2E)-2-butenoate + L-lysyl-[protein]. Its activity is inhibited by trichostatin A (TSA) and butyrate, 2 well known histone deacetylase inhibitors. histone deacetylase inhibitor. Its function is as follows. Histone deacetylase that catalyzes the deacetylation of lysine residues on the N-terminal part of the core histones (H2A, H2B, H3 and H4). Histone deacetylation gives a tag for epigenetic repression and plays an important role in transcriptional regulation, cell cycle progression and developmental events. Histone deacetylases act via the formation of large multiprotein complexes. Also involved in the deacetylation of cohesin complex protein SMC3 regulating release of cohesin complexes from chromatin. May play a role in smooth muscle cell contractility. In addition to protein deacetylase activity, also has protein-lysine deacylase activity: acts as a protein decrotonylase by mediating decrotonylation ((2E)-butenoyl) of histones. This is Histone deacetylase 8 (Hdac8) from Mus musculus (Mouse).